The following is a 1112-amino-acid chain: Patronin (microtubule-binding protein) homolog (1112 aa).

A Calponin-homology (CH) domain is found at 165 to 286; that stretch reads IDSVDALLFW…VNAFLADLFV (122 aa). Disordered regions lie at residues 324–358, 485–504, 542–566, and 788–834; these read AARSSMHNRNRPRMYNPPPAVSHSQGPSRSVSRMS, EGEDGTQSARLNRASSQPSV, MQQQMQQQQQQQAQAQSNYASPSQL, and NHSE…GSGE. Polar residues-rich tracts occupy residues 345–358 and 489–504; these read SHSQGPSRSVSRMS and GTQSARLNRASSQPSV. The segment covering 542-557 has biased composition (low complexity); it reads MQQQMQQQQQQQAQAQ. A compositionally biased stretch (basic and acidic residues) spans 802–816; the sequence is QNDRDDLSTGRKSDD. Positions 850–914 form a coiled coil; that stretch reads ALIAKTMKRK…YKRKKLEKEL (65 aa). A disordered region spans residues 916–965; that stretch reads AELSARSTGRGHSQPPFIRTKSQMSEVTESSRQNTPRMRGQSSVEQRVSV. Over residues 935–951 the composition is skewed to polar residues; that stretch reads TKSQMSEVTESSRQNTP. A compositionally biased stretch (low complexity) spans 956 to 965; that stretch reads QSSVEQRVSV. The CKK domain occupies 972–1109; it reads THKLYAKTVT…RIPHSGTPAH (138 aa).

Belongs to the CAMSAP1 family. In terms of assembly, interacts with dapk-1. As to expression, expressed in larval and adult epidermis, intestine and pharynx. Broadly expressed in the nervous system. Expressed in body wall muscle cells.

The protein resides in the cell projection. The protein localises to the axon. It is found in the dendrite. Its subcellular location is the cell membrane. It localises to the sarcolemma. The protein resides in the cytoplasm. The protein localises to the cytosol. It is found in the cytoskeleton. Its subcellular location is the perikaryon. Functionally, required for microtubule stability and anchorage by binding to the minus ends of microtubules. Acts redundantly with noca-1 to control circumferential microtubule assembly along the body which is necessary for larval development, viability, morphology and integrity of the epidermis. Promotes microtubule stability and polymerization in neurons. Involved in the maintenance of neurite morphology in ALM and PLM neurons. May play a role in synaptic protein localization in the PLM neuron. May act upstream of dlk-1 in neuronal regeneration. Plays a role in postembryonic epidermal tissue integrity and wound healing. The polypeptide is Patronin (microtubule-binding protein) homolog (Caenorhabditis elegans).